The following is a 467-amino-acid chain: Cytochrome c-552 (467 aa).

Residues 1-27 (MVKKLTGKSFALSALVAASFVAAGAMA) form the signal peptide. H87 contributes to the heme c binding site. Residues C115, C118, and K119 each coordinate heme. The heme c site is built by C153, C156, H157, C195, C198, and H199. Ca(2+) contacts are provided by E201, Y202, K250, and Q252. Y202 contacts substrate. H253 is a binding site for substrate. Residues H264, C271, C274, H275, H290, C303, C306, H307, and H382 each contribute to the heme c site.

It belongs to the cytochrome c-552 family. Ca(2+) is required as a cofactor. It depends on heme c as a cofactor.

The protein localises to the periplasm. It carries out the reaction 6 Fe(III)-[cytochrome c] + NH4(+) + 2 H2O = 6 Fe(II)-[cytochrome c] + nitrite + 8 H(+). It participates in nitrogen metabolism; nitrate reduction (assimilation). Catalyzes the reduction of nitrite to ammonia, consuming six electrons in the process. The sequence is that of Cytochrome c-552 from Shewanella amazonensis (strain ATCC BAA-1098 / SB2B).